Here is a 217-residue protein sequence, read N- to C-terminus: THAP domain-containing protein 2 (217 aa).

Residues 1–80 (MPTNCAAAGC…LKMDAVPTIF (80 aa)) form a THAP-type zinc finger. The HCFC1-binding motif (HBM) signature appears at 122–125 (EHSY).

This chain is THAP domain-containing protein 2 (Thap2), found in Mus musculus (Mouse).